The primary structure comprises 81 residues: uncharacterized protein (81 aa).

An N-terminal signal peptide occupies residues 1-16 (MNRLTFYGLCLSGAVG). Residues 55–81 (TIDPHHNHHDDHHDSHGHGHGKIKGHH) form a disordered region. Basic and acidic residues predominate over residues 57-71 (DPHHNHHDDHHDSHG). Residues 72 to 81 (HGHGKIKGHH) are compositionally biased toward basic residues.

It localises to the secreted. This is an uncharacterized protein from Dictyostelium discoideum (Social amoeba).